Reading from the N-terminus, the 494-residue chain is ATP synthase subunit beta, plastid (494 aa).

An ATP-binding site is contributed by 169-176; sequence GGAGVGKT.

Belongs to the ATPase alpha/beta chains family. In terms of assembly, F-type ATPases have 2 components, CF(1) - the catalytic core - and CF(0) - the membrane proton channel. CF(1) has five subunits: alpha(3), beta(3), gamma(1), delta(1), epsilon(1). CF(0) has four main subunits: a(1), b(1), b'(1) and c(9-12).

Its subcellular location is the plastid thylakoid membrane. It carries out the reaction ATP + H2O + 4 H(+)(in) = ADP + phosphate + 5 H(+)(out). Its function is as follows. Produces ATP from ADP in the presence of a proton gradient across the membrane. The catalytic sites are hosted primarily by the beta subunits. In Cuscuta gronovii (Common dodder), this protein is ATP synthase subunit beta, plastid (atpB).